The chain runs to 526 residues: Peptide chain release factor 3 (526 aa).

Residues 9-277 (NKRRTFAIIS…DFVEYAPGPQ (269 aa)) enclose the tr-type G domain. GTP contacts are provided by residues 18–25 (SHPDAGKT), 86–90 (DTPGH), and 140–143 (NKLD).

This sequence belongs to the TRAFAC class translation factor GTPase superfamily. Classic translation factor GTPase family. PrfC subfamily.

The protein localises to the cytoplasm. Increases the formation of ribosomal termination complexes and stimulates activities of RF-1 and RF-2. It binds guanine nucleotides and has strong preference for UGA stop codons. It may interact directly with the ribosome. The stimulation of RF-1 and RF-2 is significantly reduced by GTP and GDP, but not by GMP. This chain is Peptide chain release factor 3, found in Legionella pneumophila (strain Lens).